The sequence spans 674 residues: Sodium/myo-inositol cotransporter 2 (674 aa).

Residues Met-1 to Gly-27 lie on the Extracellular side of the membrane. Residues Asp-28–Val-48 form a helical membrane-spanning segment. Residues Lys-49–Lys-56 lie on the Cytoplasmic side of the membrane. Residues Gly-57–Ser-77 traverse the membrane as a helical segment. Residues Asn-78–Glu-102 are Extracellular-facing. The chain crosses the membrane as a helical span at residues Phe-103–Gly-123. The Cytoplasmic portion of the chain corresponds to Gln-124–Arg-140. Residues Ile-141–Asp-161 traverse the membrane as a helical segment. At Met-162–Ser-180 the chain is on the extracellular side. Residues Val-181–Ile-201 traverse the membrane as a helical segment. The Cytoplasmic segment spans residues Tyr-202–Thr-208. The chain crosses the membrane as a helical span at residues Leu-209–Met-229. Residues Glu-230–Pro-272 lie on the Extracellular side of the membrane. A helical transmembrane segment spans residues Gly-273 to Val-293. Residues Gln-294–Gly-308 lie on the Cytoplasmic side of the membrane. A helical membrane pass occupies residues Ser-309–Val-329. At Ser-330–Gly-375 the chain is on the extracellular side. The chain crosses the membrane as a helical span at residues Leu-376–Ala-396. The Cytoplasmic portion of the chain corresponds to Ser-397–Met-418. A helical transmembrane segment spans residues Ile-419–Val-439. At Gln-440 to Gln-446 the chain is on the extracellular side. A helical transmembrane segment spans residues Leu-447–Val-467. The Cytoplasmic segment spans residues Leu-468 to Gly-479. The helical transmembrane segment at Ala-480–Ile-500 threads the bilayer. At Tyr-501 to Tyr-521 the chain is on the extracellular side. The helical transmembrane segment at Leu-522 to Leu-542 threads the bilayer. Residues Thr-543–Thr-653 are Cytoplasmic-facing. Residues Leu-654–Ala-674 traverse the membrane as a helical segment.

This sequence belongs to the sodium:solute symporter (SSF) (TC 2.A.21) family. As to expression, expressed in brain, lung and kidney. In the kidney, strongly expressed in the cortex, at the luminal side of proximal convoluted tubules and in BBMVs. Weaker expression observed in the medulla (at protein level).

It is found in the membrane. It localises to the apical cell membrane. The catalysed reaction is myo-inositol(out) + 2 Na(+)(out) = myo-inositol(in) + 2 Na(+)(in). The enzyme catalyses 1D-chiro-inositol(out) + 2 Na(+)(out) = 1D-chiro-inositol(in) + 2 Na(+)(in). It catalyses the reaction D-glucose(out) + 2 Na(+)(out) = D-glucose(in) + 2 Na(+)(in). It carries out the reaction D-xylose(out) + 2 Na(+)(out) = D-xylose(in) + 2 Na(+)(in). With respect to regulation, MI transport activity stimulated five-fold under 24 hour hypertonic shock conditions. MI inward currents were gradually inhibited as increasing amounts of phlorizin were added to the superfusion medium. When sodium is replaced by potassium, MI uptake is dramatically reduced and in the presence of L-fucose or D-chiro-inositol (DCI), the specific accumulation of tracer amounts of MI is also reduced. Functionally, involved in the sodium-dependent cotransport of myo-inositol (MI) with a Na(+):MI stoichiometry of 2:1. Exclusively responsible for apical MI transport and absorption in intestine. Can also transport D-chiro-inositol (DCI) but not L-fucose. Exhibits stereospecific cotransport of both D-glucose and D-xylose. May induce apoptosis through the TNF-alpha, PDCD1 pathway. May play a role in the regulation of MI concentration in serum, involving reabsorption in at least the proximal tubule of the kidney. This chain is Sodium/myo-inositol cotransporter 2, found in Oryctolagus cuniculus (Rabbit).